Here is a 150-residue protein sequence, read N- to C-terminus: Ribonuclease HI (150 aa).

Positions 1-142 constitute an RNase H type-1 domain; that stretch reads MSDSVELFTD…ADQLANRGVD (142 aa). The Mg(2+) site is built by Asp-10, Glu-48, Asp-70, and Asp-134.

Belongs to the RNase H family. As to quaternary structure, monomer. The cofactor is Mg(2+).

The protein localises to the cytoplasm. The catalysed reaction is Endonucleolytic cleavage to 5'-phosphomonoester.. Its function is as follows. Endonuclease that specifically degrades the RNA of RNA-DNA hybrids. The chain is Ribonuclease HI from Pseudomonas syringae pv. tomato (strain ATCC BAA-871 / DC3000).